Consider the following 833-residue polypeptide: Neuronal tyrosine-phosphorylated phosphoinositide-3-kinase adapter 1 (833 aa).

5 disordered regions span residues 1 to 45 (MNLL…PGVR), 64 to 191 (PASQ…LQRL), 219 to 423 (VFRG…RELP), 645 to 674 (EEDGARAWNGSTEGPGKVEHEDRGPVPSGI), and 736 to 765 (HTPRPCSQPRDALSQTHPVLPLPLPPQPAR). Residues 8 to 25 (TKLEWRQHKEEEAKRSSS) show a composition bias toward basic and acidic residues. Residues 76–181 (STMAPRSLSC…DESCAPAPSP (106 aa)) are involved in CYFIP1- and NCKAP1-binding. The segment covering 111 to 120 (PPAKPRRHPS) has biased composition (basic residues). Positions 162-171 (SPNTQLSVSF) are enriched in polar residues. Gly residues predominate over residues 220 to 239 (FRGGGRSGGGLAGPPLGSGG). Positions 248–257 (SDSEDSEAIY) are enriched in acidic residues. Residues 275-285 (GPPPLTAPSPP) show a composition bias toward pro residues.

Belongs to the NYAP family. As to quaternary structure, interacts with ACOT9, ARHGAP26 and PIK3R2. Interacts with components of the WAVE1 complex, CYFIP1 and NCKAP1; this interaction mediates PI3K-WAVE1 association and actin cytoskeleton remodeling. Phosphorylated on tyrosine residues by FYN upon stimulation with CNTN5. Phosphorylation begins at 14 dpc, reaches a peak during perinatal days in brain, then gradually decreases. As to expression, expressed predominantly in brain where it is present in the neurons, but not in astrocytes or oligodendrites.

Functionally, activates PI3K and concomitantly recruits the WAVE1 complex to the close vicinity of PI3K and regulates neuronal morphogenesis. In Mus musculus (Mouse), this protein is Neuronal tyrosine-phosphorylated phosphoinositide-3-kinase adapter 1 (Nyap1).